We begin with the raw amino-acid sequence, 144 residues long: MNIALIAHDEKKDEMMMFTRAYEAYFAKNTLYATGTTGQRIMEATALTVHRCKSGPLGGDQEIGAMVARGEIDIVIFLRDPLTAQPHEPDVSALIRLCDVYDLPLATNVGTAEILINGLEQGEFQWREIIRKRHEEEQRKFLTD.

Residues 1–144 (MNIALIAHDE…EEEQRKFLTD (144 aa)) form the MGS-like domain. Substrate-binding positions include H8, K12, 34–37 (TGTT), and 54–55 (SG). The Proton donor/acceptor role is filled by D60. H87 contacts substrate.

The protein belongs to the methylglyoxal synthase family.

The catalysed reaction is dihydroxyacetone phosphate = methylglyoxal + phosphate. Its function is as follows. Catalyzes the formation of methylglyoxal from dihydroxyacetone phosphate. The sequence is that of Methylglyoxal synthase from Exiguobacterium sibiricum (strain DSM 17290 / CCUG 55495 / CIP 109462 / JCM 13490 / 255-15).